The primary structure comprises 113 residues: uncharacterized protein (113 aa).

A helical transmembrane segment spans residues 4–26; it reads VLFKIAVALLYLLSFFLHRLHLR. Residues 32–74 are disordered; the sequence is RRRRRRHHRRHHRRHHHHRRRRRRRRRRRRRHHRHHHHRHRRR.

It localises to the membrane. This is an uncharacterized protein from Saccharomyces cerevisiae (strain ATCC 204508 / S288c) (Baker's yeast).